The sequence spans 150 residues: UPF0756 membrane protein plu2726 (150 aa).

Transmembrane regions (helical) follow at residues 8-28, 51-71, 88-108, and 123-143; these read LLVLLVLAALGIISHNMTVTL, YGLTIGVLILTVGVMAPIASG, LLAIVIGVLVSWLGSRGVSLM, and VLGVALFKGVPVGPLIAAGIL.

Belongs to the UPF0756 family.

The protein localises to the cell membrane. This chain is UPF0756 membrane protein plu2726, found in Photorhabdus laumondii subsp. laumondii (strain DSM 15139 / CIP 105565 / TT01) (Photorhabdus luminescens subsp. laumondii).